A 107-amino-acid chain; its full sequence is Diuretic hormone 45 (107 aa).

The propeptide occupies 1–44; sequence LYAMSPMAARYSAGAPWLYLLADMPRDSQRLVDPADLHEGRARP. V91 is subject to Valine amide.

In terms of tissue distribution, expressed in corpora cardiaca (CC), corpora allata (CA), antennal lobe (AL) and gnathal ganglion (GNG) (at protein level). Expression in AL and GNG detected in some animals, in CC and CA in few animals (at protein level).

Its subcellular location is the secreted. Regulation of fluid secretion. This Agrotis ipsilon (Black cutworm moth) protein is Diuretic hormone 45.